The chain runs to 359 residues: 3-dehydroquinate synthase (359 aa).

NAD(+)-binding positions include 72–77, 106–110, 130–131, K143, K152, and 170–173; these read EGEIHK, GVIGD, TS, and CLKT. 3 residues coordinate Zn(2+): E185, H248, and H264.

It belongs to the sugar phosphate cyclases superfamily. Dehydroquinate synthase family. Co(2+) serves as cofactor. The cofactor is Zn(2+). NAD(+) is required as a cofactor.

It is found in the cytoplasm. The enzyme catalyses 7-phospho-2-dehydro-3-deoxy-D-arabino-heptonate = 3-dehydroquinate + phosphate. The protein operates within metabolic intermediate biosynthesis; chorismate biosynthesis; chorismate from D-erythrose 4-phosphate and phosphoenolpyruvate: step 2/7. Catalyzes the conversion of 3-deoxy-D-arabino-heptulosonate 7-phosphate (DAHP) to dehydroquinate (DHQ). The protein is 3-dehydroquinate synthase of Dehalococcoides mccartyi (strain ATCC BAA-2266 / KCTC 15142 / 195) (Dehalococcoides ethenogenes (strain 195)).